The chain runs to 573 residues: NEDD4-binding protein 3-B (573 aa).

Disordered regions lie at residues 119–138 (EFSK…RFGP), 173–220 (CVGS…NSYS), and 384–405 (GENE…NLED). Positions 125 to 135 (LPERGHSDKSR) are enriched in basic and acidic residues. A compositionally biased stretch (low complexity) spans 186 to 196 (SNSHSNNPSES). 2 stretches are compositionally biased toward polar residues: residues 207 to 220 (DSKQ…NSYS) and 392 to 401 (KQSQSDNSGP). Residues 287-474 (ESVEDVARQL…CLQALEDVKS (188 aa)) adopt a coiled-coil conformation.

The protein belongs to the N4BP3 family.

It localises to the cytoplasmic vesicle. It is found in the cell projection. Its subcellular location is the axon. The protein localises to the dendrite. Its function is as follows. Plays a role in axon and dendrite arborization during cranial nerve development. Also important for neural crest migration and early development of other anterior structures including eye, brain and cranial cartilage. In Xenopus laevis (African clawed frog), this protein is NEDD4-binding protein 3-B.